A 639-amino-acid polypeptide reads, in one-letter code: Protein phosphatase 2C 35 (639 aa).

A PPM-type phosphatase domain is found at 227-630; sequence GGDPCGLQWA…DDVSVIVISL (404 aa). 2 residues coordinate Mn(2+): D262 and G263. The interval 295–341 is disordered; sequence QNVQHDQRPDQPGSAPSTTASDNQDQWGRRRRTRRSRPPRGADDDQR. The span at 308–320 shows a compositional bias: polar residues; that stretch reads SAPSTTASDNQDQ. Basic residues predominate over residues 323 to 332; the sequence is RRRRTRRSRP. D558 and D621 together coordinate Mn(2+).

Belongs to the PP2C family. In terms of assembly, interacts with XA21 (via juxtamembrane and kinase domains). The cofactor is Mg(2+). Requires Mn(2+) as cofactor.

The protein resides in the cell membrane. The catalysed reaction is O-phospho-L-seryl-[protein] + H2O = L-seryl-[protein] + phosphate. The enzyme catalyses O-phospho-L-threonyl-[protein] + H2O = L-threonyl-[protein] + phosphate. Protein phosphatase that acts on XA21 pathogen recognition receptor. Negatively regulates cell death and XA21-mediated innate immunity. The protein is Protein phosphatase 2C 35 (XB15) of Oryza sativa subsp. japonica (Rice).